A 127-amino-acid chain; its full sequence is uncharacterized protein (127 aa).

This is an uncharacterized protein from Acanthamoeba polyphaga (Amoeba).